A 292-amino-acid polypeptide reads, in one-letter code: Putative two-component response regulator-like APRR4 (292 aa).

In terms of domain architecture, Response regulatory spans 43-158 (RVLVFDEDPS…DLRIVFKHLV (116 aa)). A disordered region spans residues 168-215 (VTGEAEKAAGEKSSSVGDSTIRNPNKSKRSSCLEAEVNEEDRHDHNDR). Over residues 179-191 (KSSSVGDSTIRNP) the composition is skewed to polar residues. The segment at residues 225–275 (RVVWDEELHQNFLNAVDFLGLERAVPKKILDVMKVDYISRENVASHLQVTF) is a DNA-binding region (myb-like GARP).

This sequence belongs to the ARR-like family. In terms of assembly, binds the target DNA as a monomer.

It is found in the nucleus. Its function is as follows. Transcriptional activator that binds specifically to the DNA sequence 5'-[AG]GATT-3'. The protein is Putative two-component response regulator-like APRR4 (APRR4) of Arabidopsis thaliana (Mouse-ear cress).